The following is a 264-amino-acid chain: Phosphoribosylaminoimidazole-succinocarboxamide synthase (264 aa).

This sequence belongs to the SAICAR synthetase family.

It catalyses the reaction 5-amino-1-(5-phospho-D-ribosyl)imidazole-4-carboxylate + L-aspartate + ATP = (2S)-2-[5-amino-1-(5-phospho-beta-D-ribosyl)imidazole-4-carboxamido]succinate + ADP + phosphate + 2 H(+). Its pathway is purine metabolism; IMP biosynthesis via de novo pathway; 5-amino-1-(5-phospho-D-ribosyl)imidazole-4-carboxamide from 5-amino-1-(5-phospho-D-ribosyl)imidazole-4-carboxylate: step 1/2. The protein is Phosphoribosylaminoimidazole-succinocarboxamide synthase (purC) of Synechocystis sp. (strain ATCC 27184 / PCC 6803 / Kazusa).